An 836-amino-acid chain; its full sequence is Protein IWS1 homolog A (836 aa).

Positions 1 to 542 (MEADNYSPEH…DMKSGKMGDY (542 aa)) are disordered. 8 stretches are compositionally biased toward basic and acidic residues: residues 20-36 (QDER…EQRS), 43-122 (HQSE…DRSP), 133-148 (EPVR…DVPR), 157-186 (DERH…DKAP), 206-218 (DSKD…HAAS), 288-309 (VPVK…KASD), 370-386 (RSSE…KKLQ), and 458-469 (ERKSKTETKSAD). The span at 476-485 (SDSENEEENL) shows a compositional bias: acidic residues. The segment covering 533 to 542 (DMKSGKMGDY) has biased composition (basic and acidic residues). One can recognise a TFIIS N-terminal domain in the interval 631–709 (SAIKEWLTPL…NEWSRPIFGL (79 aa)). The tract at residues 714-746 (KGMTREEREQRDIEQMPQRRRMSSSGGQTPRRD) is disordered. Residues 716–727 (MTREEREQRDIE) are compositionally biased toward basic and acidic residues.

The protein belongs to the IWS1 family.

The protein localises to the nucleus. Its function is as follows. Transcription factor which plays a key role in defining the composition of the RNA polymerase II (RNAPII) elongation complex and in modulating the production of mature mRNA transcripts. This is Protein IWS1 homolog A (iws1-a) from Xenopus laevis (African clawed frog).